Here is a 231-residue protein sequence, read N- to C-terminus: Small ribosomal subunit protein uS3 (231 aa).

Residues 17–86 (VEKYLTKELK…SPQIEVQQVQ (70 aa)) enclose the KH type-2 domain.

Belongs to the universal ribosomal protein uS3 family. In terms of assembly, part of the 30S ribosomal subunit.

Binds the lower part of the 30S subunit head. The protein is Small ribosomal subunit protein uS3 of Methanoregula boonei (strain DSM 21154 / JCM 14090 / 6A8).